The primary structure comprises 143 residues: Large ribosomal subunit protein uL13 (143 aa).

The protein belongs to the universal ribosomal protein uL13 family. As to quaternary structure, part of the 50S ribosomal subunit.

Functionally, this protein is one of the early assembly proteins of the 50S ribosomal subunit, although it is not seen to bind rRNA by itself. It is important during the early stages of 50S assembly. The polypeptide is Large ribosomal subunit protein uL13 (Dehalococcoides mccartyi (strain ATCC BAA-2100 / JCM 16839 / KCTC 5957 / BAV1)).